Here is a 185-residue protein sequence, read N- to C-terminus: Ribosome-recycling factor (185 aa).

Belongs to the RRF family.

It is found in the cytoplasm. Functionally, responsible for the release of ribosomes from messenger RNA at the termination of protein biosynthesis. May increase the efficiency of translation by recycling ribosomes from one round of translation to another. This Geobacillus kaustophilus (strain HTA426) protein is Ribosome-recycling factor.